The following is a 156-amino-acid chain: Small ribosomal subunit protein uS7 (156 aa).

This sequence belongs to the universal ribosomal protein uS7 family. In terms of assembly, part of the 30S ribosomal subunit. Contacts proteins S9 and S11.

One of the primary rRNA binding proteins, it binds directly to 16S rRNA where it nucleates assembly of the head domain of the 30S subunit. Is located at the subunit interface close to the decoding center, probably blocks exit of the E-site tRNA. This is Small ribosomal subunit protein uS7 from Shewanella sediminis (strain HAW-EB3).